Reading from the N-terminus, the 753-residue chain is Bifunctional terpene synthase FUP1 (753 aa).

The tract at residues 1–329 is terpene cyclase; the sequence is MGPLLYRSRH…CSACPRQNAW (329 aa). Residue Asp96 participates in Mg(2+) binding. Positions 96 to 100 match the DDXXD 1 motif; it reads DDTGE. The NSE/DTE motif lies at 231-239; it reads NDYFSWERE. The tract at residues 330-745 is prenyltransferase; sequence KNDTLSNGQN…MLRLCLAKLS (416 aa). 3 residues coordinate isopentenyl diphosphate: Lys461, Arg464, and His493. Mg(2+)-binding residues include Asp500 and Asp504. Positions 500–504 match the DDXXD 2 motif; sequence DDLED. Arg509 lines the dimethylallyl diphosphate pocket. Isopentenyl diphosphate is bound at residue Arg510. Dimethylallyl diphosphate is bound by residues Lys587, Thr588, Gln625, Asn632, Lys640, and Lys650.

This sequence in the N-terminal section; belongs to the terpene synthase family. It in the C-terminal section; belongs to the FPP/GGPP synthase family. As to quaternary structure, hexamer. Mg(2+) is required as a cofactor.

The enzyme catalyses isopentenyl diphosphate + (2E,6E)-farnesyl diphosphate = (2E,6E,10E)-geranylgeranyl diphosphate + diphosphate. The protein operates within secondary metabolite biosynthesis; terpenoid biosynthesis. Bifunctional terpene synthase; part of the gene cluster that mediates the biosynthesis of the mycotoxin fusaproliferin (FUP) that belongs to the class of bicyclic sesterterpenoids. The FUP biosynthetic pathway starts with the enzyme encoded by FUP1 that combines a C-terminal prenyltransferase domain responsible for the synthesis of geranylgeranyl diphosphate with the N-terminal terpene cyclase domain, to yield preterpestacin I. Preterpestacin I is then decorated by oxygenation steps that are catalyzed by two cytochrome P450 monooxygenases. First, FUP2 introduces a hydroxyl group at the C-24 position resulting in the formation of preterpestacin IIa, which can be further oxidized. The second P450 monooxygenase catalyzes the hydroxylation at C-16 and C-17 of preterpestacin IIa, producing preterpestacin III. Subsequently, the FAD-dependent oxidoreductase FUP4 catalyzes the oxidation of the hydroxy group at the C-16 position to a keto group, leading to the formation of (-)-terpestacin, which is the immediate precursor of FUP. The final step in the proposed biosynthetic pathway is the addition of an acetyl group at the C-24 position of terpestacin, which is catalyzed by the acetyltransferase FUP5. This is Bifunctional terpene synthase FUP1 from Fusarium proliferatum (strain ET1) (Orchid endophyte fungus).